Here is a 166-residue protein sequence, read N- to C-terminus: Large ribosomal subunit protein uL10 (166 aa).

It belongs to the universal ribosomal protein uL10 family. As to quaternary structure, part of the ribosomal stalk of the 50S ribosomal subunit. The N-terminus interacts with L11 and the large rRNA to form the base of the stalk. The C-terminus forms an elongated spine to which L12 dimers bind in a sequential fashion forming a multimeric L10(L12)X complex.

Its function is as follows. Forms part of the ribosomal stalk, playing a central role in the interaction of the ribosome with GTP-bound translation factors. The chain is Large ribosomal subunit protein uL10 from Enterococcus faecalis (strain ATCC 700802 / V583).